The chain runs to 541 residues: Nectin 1b (541 aa).

The signal sequence occupies residues 1 to 21 (MDKQESFFVGHKSHRCSQNRS). At 22–396 (VSQIHQRTSR…PAELHSSGAA (375 aa)) the chain is on the extracellular side. N-linked (GlcNAc...) asparagine glycans are attached at residues Asn51, Asn105, Asn180, Asn242, Asn326, Asn337, and Asn372. The Ig-like V-type domain occupies 77-182 (GDTVELKCLF…GNRENMVNLT (106 aa)). A disulfide bridge connects residues Cys84 and Cys165. Ig-like C2-type domains are found at residues 187 to 282 (PVTK…VILN) and 287 to 374 (PEVK…VNVT). Disulfide bonds link Cys212-Cys266 and Cys309-Cys356. Residues 397–417 (IGGAVGGVALLVAAIALLVFF) form a helical membrane-spanning segment. The Cytoplasmic portion of the chain corresponds to 418–541 (LRRRQRTFKG…SVISKKEWYV (124 aa)). A disordered region spans residues 440-507 (YSKAGGMPAH…VDEGESRDYD (68 aa)). Residues 479–493 (SGDRDFDGNSEDLKR) show a composition bias toward basic and acidic residues.

It belongs to the nectin family. As to quaternary structure, cis- and trans-homodimer. Can form trans-heterodimers. As to expression, expressed in the developing eye and nervous system.

The protein localises to the cell membrane. The protein resides in the cell junction. It is found in the adherens junction. In terms of biological role, cell adhesion molecule that promotes cell-cell contacts and plays important roles in the development of the nervous system. Acts by forming homophilic or heterophilic trans-dimers. This Danio rerio (Zebrafish) protein is Nectin 1b.